A 419-amino-acid polypeptide reads, in one-letter code: Carboxypeptidase A2 (419 aa).

Positions 1 to 18 (MAMRLILFFGALFGHIYC) are cleaved as a signal peptide. The propeptide at 19–114 (LETFVGDQVL…EMLFNRRRER (96 aa)) is activation peptide. The Peptidase M14 domain maps to 122–414 (AYHTLEEISQ…LGLKAIMEHV (293 aa)). Zn(2+) contacts are provided by histidine 179 and glutamate 182. Substrate contacts are provided by residues 179-182 (HARE), arginine 237, and 254-255 (NR). Residues cysteine 248 and cysteine 271 are joined by a disulfide bond. Zn(2+) is bound at residue histidine 306. Residue 307 to 308 (SY) coordinates substrate. Cysteine 320 and cysteine 354 are oxidised to a cystine. Tyrosine 358 provides a ligand contact to substrate. Residue glutamate 380 is the Proton donor/acceptor of the active site.

The protein belongs to the peptidase M14 family. Zn(2+) is required as a cofactor.

It localises to the secreted. The enzyme catalyses Similar to that of carboxypeptidase A (EC 3.4.17.1), but with a preference for bulkier C-terminal residues.. Functionally, carboxypeptidase that catalyzes the release of a C-terminal amino acid, with a preference for large aromatic C-terminal residues. This Homo sapiens (Human) protein is Carboxypeptidase A2 (CPA2).